A 204-amino-acid polypeptide reads, in one-letter code: Large ribosomal subunit protein uL4 (204 aa).

A disordered region spans residues 48 to 75; that stretch reads HTKGRSDVSGGGKKPWRQKGRGGARAGS.

The protein belongs to the universal ribosomal protein uL4 family. Part of the 50S ribosomal subunit.

Its function is as follows. One of the primary rRNA binding proteins, this protein initially binds near the 5'-end of the 23S rRNA. It is important during the early stages of 50S assembly. It makes multiple contacts with different domains of the 23S rRNA in the assembled 50S subunit and ribosome. Forms part of the polypeptide exit tunnel. This is Large ribosomal subunit protein uL4 from Campylobacter fetus subsp. fetus (strain 82-40).